Consider the following 158-residue polypeptide: Cyclic pyranopterin monophosphate synthase (158 aa).

Residues 75-77 and 113-114 contribute to the substrate site; these read LCH and ME. Residue Asp-128 is part of the active site.

The protein belongs to the MoaC family. Homohexamer; trimer of dimers.

It catalyses the reaction (8S)-3',8-cyclo-7,8-dihydroguanosine 5'-triphosphate = cyclic pyranopterin phosphate + diphosphate. It participates in cofactor biosynthesis; molybdopterin biosynthesis. In terms of biological role, catalyzes the conversion of (8S)-3',8-cyclo-7,8-dihydroguanosine 5'-triphosphate to cyclic pyranopterin monophosphate (cPMP). This chain is Cyclic pyranopterin monophosphate synthase, found in Azorhizobium caulinodans (strain ATCC 43989 / DSM 5975 / JCM 20966 / LMG 6465 / NBRC 14845 / NCIMB 13405 / ORS 571).